The following is a 377-amino-acid chain: Succinyl-diaminopimelate desuccinylase (377 aa).

A Zn(2+)-binding site is contributed by His67. The active site involves Asp69. Zn(2+) is bound at residue Asp100. The active-site Proton acceptor is Glu134. Glu135, Glu163, and His349 together coordinate Zn(2+).

Belongs to the peptidase M20A family. DapE subfamily. As to quaternary structure, homodimer. Zn(2+) is required as a cofactor. The cofactor is Co(2+).

It catalyses the reaction N-succinyl-(2S,6S)-2,6-diaminopimelate + H2O = (2S,6S)-2,6-diaminopimelate + succinate. The protein operates within amino-acid biosynthesis; L-lysine biosynthesis via DAP pathway; LL-2,6-diaminopimelate from (S)-tetrahydrodipicolinate (succinylase route): step 3/3. Functionally, catalyzes the hydrolysis of N-succinyl-L,L-diaminopimelic acid (SDAP), forming succinate and LL-2,6-diaminopimelate (DAP), an intermediate involved in the bacterial biosynthesis of lysine and meso-diaminopimelic acid, an essential component of bacterial cell walls. The polypeptide is Succinyl-diaminopimelate desuccinylase (Haemophilus influenzae (strain PittGG)).